Reading from the N-terminus, the 524-residue chain is Anthranilate synthase component 1 (524 aa).

L-tryptophan contacts are provided by residues serine 55 and 297 to 299; that span reads PYM. 332-333 provides a ligand contact to chorismate; the sequence is GT. Glutamate 359 lines the Mg(2+) pocket. Residues tyrosine 447, arginine 467, 485–487, and glycine 487 contribute to the chorismate site; that span reads GAG. Glutamate 500 contributes to the Mg(2+) binding site.

This sequence belongs to the anthranilate synthase component I family. Heterotetramer consisting of two non-identical subunits: a beta subunit (TrpG) and a large alpha subunit (TrpE). It depends on Mg(2+) as a cofactor.

It catalyses the reaction chorismate + L-glutamine = anthranilate + pyruvate + L-glutamate + H(+). The protein operates within amino-acid biosynthesis; L-tryptophan biosynthesis; L-tryptophan from chorismate: step 1/5. Feedback inhibited by tryptophan. Its function is as follows. Part of a heterotetrameric complex that catalyzes the two-step biosynthesis of anthranilate, an intermediate in the biosynthesis of L-tryptophan. In the first step, the glutamine-binding beta subunit (TrpG) of anthranilate synthase (AS) provides the glutamine amidotransferase activity which generates ammonia as a substrate that, along with chorismate, is used in the second step, catalyzed by the large alpha subunit of AS (TrpE) to produce anthranilate. In the absence of TrpG, TrpE can synthesize anthranilate directly from chorismate and high concentrations of ammonia. This chain is Anthranilate synthase component 1 (trpE), found in Haloferax volcanii (strain ATCC 29605 / DSM 3757 / JCM 8879 / NBRC 14742 / NCIMB 2012 / VKM B-1768 / DS2) (Halobacterium volcanii).